The chain runs to 205 residues: Beta-crystallin B2 (205 aa).

The residue at position 2 (A2) is an N-acetylalanine. Residues 2-16 (ASDHQTQAGKPQPLN) are N-terminal arm. Beta/gamma crystallin 'Greek key' domains are found at residues 17-56 (PKII…LVQA) and 57-101 (GPWV…RPIK). The connecting peptide stretch occupies residues 102–106 (VDSQE). 2 consecutive Beta/gamma crystallin 'Greek key' domains span residues 107–148 (HKII…RVQS) and 149–191 (GTWV…RRIR). Residues 193–205 (MQWHQRGAFHPTN) form a C-terminal arm region.

Belongs to the beta/gamma-crystallin family. As to quaternary structure, homo/heterodimer, or complexes of higher-order. The structure of beta-crystallin oligomers seems to be stabilized through interactions between the N-terminal arms.

Its function is as follows. Crystallins are the dominant structural components of the vertebrate eye lens. The sequence is that of Beta-crystallin B2 (CRYBB2) from Oryctolagus cuniculus (Rabbit).